We begin with the raw amino-acid sequence, 324 residues long: Probable UDP-sugar transporter protein SLC35A4 (324 aa).

At 1-18 the chain is on the cytoplasmic side; that stretch reads MSVEDGGVPGLGRPRKAR. A helical membrane pass occupies residues 19–39; that stretch reads WTLMLLLSTAMYGAHAPLLAL. The Lumenal portion of the chain corresponds to 40-52; the sequence is CHVDGRVPFRPSS. A helical transmembrane segment spans residues 53-73; that stretch reads AVLLTELTKLLLCALSLLVGW. Residues 74–85 are Cytoplasmic-facing; it reads QAWPQGTPPWRQ. The helical transmembrane segment at 86–106 threads the bilayer; sequence AAPFALSALLYGANNNLVIYL. The Lumenal portion of the chain corresponds to 107 to 141; the sequence is QRYMDPSTYQVLSNLKIGSTALFYCLCLRHRLSAR. Residues 142–162 form a helical membrane-spanning segment; the sequence is QGLALLLLMAAGACYAAGGLQ. Over 163–180 the chain is Cytoplasmic; that stretch reads DPGTTLPGPPSAAATSPM. A helical membrane pass occupies residues 181 to 201; that stretch reads PLHITPLGLLLLILYCLISGL. Residues 202-214 are Lumenal-facing; the sequence is SSVYTELLMKRQR. Residues 215-235 form a helical membrane-spanning segment; it reads LPLALQNLFLYSFGVLLNLGL. Residues 236–248 lie on the Cytoplasmic side of the membrane; sequence HAGGGPGPGLLEG. Residues 249-271 form a helical membrane-spanning segment; that stretch reads FSGWMALVVLSQALNGLLMSAVM. The Lumenal segment spans residues 272–275; sequence KHGS. A helical transmembrane segment spans residues 276-298; it reads SITRLFVVSCSLVVNAVLSAALL. Over 299–324 the chain is Cytoplasmic; it reads RLQLTAAFFLATLLIGLAVRLYYGSR.

Belongs to the nucleotide-sugar transporter family. SLC35A subfamily. Found in a complex with SLC35A2 and SLC35A3.

It localises to the golgi apparatus membrane. It carries out the reaction CDP-L-ribitol(in) + CDP(out) = CDP-L-ribitol(out) + CDP(in). Mediates the transport of CDP-ribitol. Does not exhibit CMP-sialic acid, UDP-galactose and UDP-N-acetylglucosamine transport activity. This chain is Probable UDP-sugar transporter protein SLC35A4, found in Bos taurus (Bovine).